The sequence spans 584 residues: MDRNSVIGLVLISLIMIVWMQFMAPEKKPLQDIDKPAVSLQEEVSPVSDIPAAAATPESYGEFSAMSDGEEKLLTVDNEYFTAVLSSRGATLKSMMLKKHLDSSREQFNLIRKNDSGALSLFFLTQAGKQIDTRDLYFSTAVTESQVTVGADNQFSVTYRLDVAPEKNIVITYTFSGDSYAIGYDISMNGFASEIAGNEFQLQWDGGLVHSEKNDDDELHNSWAAAYMGGSLLKLDASDQSKTYREEQSGVAGWVAARTKYFVAAMIPSSETEGVYLAGKRLAGEPFENYTTALKFRVPSDESSFKESLRLYVGPIDYNVLNALGVNLEKIMDFGWDWLTRPFAEYIILPIFDLLNKFIGNYGLIIIIFAFLIKLVTYPLTMASTKSMKKMSALQPMMKEIQEKYKDNPAKLQSELGRIYKEAGVNPLGGCLPVVLQMPLLFAMFYVFRSSIQLRQHGFLWANDLSVPDSILDFGFSIPLYGDHIALFPILMAVAVFLQQKITPTAQTNDQMKAMIYIFPVMMLLFFNNMPAGLGLYYLMFNVFSIAQTWYINKTASTDDLPALSPVVAAPPKAPKKKKNARKR.

The next 5 helical transmembrane spans lie at 5-25 (SVIG…FMAP), 358-378 (FIGN…LVTY), 428-448 (LGGC…FYVF), 478-498 (IPLY…AVFL), and 516-536 (IYIF…GLGL). Positions 563–584 (ALSPVVAAPPKAPKKKKNARKR) are disordered. Positions 574–584 (APKKKKNARKR) are enriched in basic residues.

Belongs to the OXA1/ALB3/YidC family. Type 1 subfamily. In terms of assembly, interacts with the Sec translocase complex via SecD. Specifically interacts with transmembrane segments of nascent integral membrane proteins during membrane integration.

The protein resides in the cell inner membrane. Its function is as follows. Required for the insertion and/or proper folding and/or complex formation of integral membrane proteins into the membrane. Involved in integration of membrane proteins that insert both dependently and independently of the Sec translocase complex, as well as at least some lipoproteins. Aids folding of multispanning membrane proteins. This chain is Membrane protein insertase YidC, found in Prosthecochloris aestuarii (strain DSM 271 / SK 413).